We begin with the raw amino-acid sequence, 239 residues long: Lipid transferase CIDEC (239 aa).

The required for liquid-liquid phase separation (LLPS) stretch occupies residues 1-35 (MDYAMKSLSLLYPRSLSRHVAVSTAVVTQQLVSKP). The CIDE-N domain maps to 41-118 (RARPCRVSTA…VLLKGQKWKP (78 aa)). The RKKR polybasic motif motif lies at 123–126 (RKKR).

Belongs to the CIDE family. Homodimer. Homooligomer; undergoes liquid-liquid phase separation (LLPS) via its N-terminus, facilitating lipid droplet fusion, occurs at the lipid droplet contact sites. Interacts with CIDEA. Interacts with PLIN1. Interacts with NFAT5; this interaction is direct and retains NFAT5 in the cytoplasm. Interacts with CEBPB. Interacts with isoform CLSTN3beta of CLSTN3; inhibiting the lipid transferase activity of CIDEC. Post-translationally, ubiquitinated and targeted to proteasomal degradation, resulting in a short half-life (about 15 minutes in 3T3-L1 cells). Protein stability depends on triaclyglycerol synthesis, fatty acid availability and lipid droplet formation. In terms of tissue distribution, expressed almost exclusively in adipose tissue, including subcutaneous and epididymal white adipose tissue (at protein level). Although abundantly present in brown adipose tissue at the mRNA level, the protein is almost undetectable in this tissue, or at moderate levels. Expressed in the mammary gland, in stromal adipose tissue, but becomes undetectable at the end of pregnancy and during lactation (at protein level). Expressed at low levels in skeletal muscle and heart.

Its subcellular location is the lipid droplet. The protein localises to the endoplasmic reticulum. The protein resides in the nucleus. It carries out the reaction a triacyl-sn-glycerol(in) = a triacyl-sn-glycerol(out). Its function is as follows. Lipid transferase specifically expressed in white adipose tissue, which promotes unilocular lipid droplet formation by mediating lipid droplet fusion. Lipid droplet fusion promotes their enlargement, restricting lipolysis and favoring lipid storage. Localizes on the lipid droplet surface, at focal contact sites between lipid droplets, and mediates atypical lipid droplet fusion by undergoing liquid-liquid phase separation (LLPS) and promoting directional net neutral lipid transfer from the smaller to larger lipid droplets. The transfer direction may be driven by the internal pressure difference between the contacting lipid droplet pair. Its role in neutral lipid transfer and lipid droplet enlargement is activated by the interaction with PLIN1. May also act as a CEBPB coactivator in the white adipose tissue to control the expression of a subset of CEBPB downstream target genes, including SOCS1, SOCS3, TGFB1, TGFBR1, ID2 and XDH. When overexpressed in preadipocytes, induces apoptosis or increases cell susceptibility to apoptosis induced by serum deprivation or TGFB treatment. The chain is Lipid transferase CIDEC from Mus musculus (Mouse).